Reading from the N-terminus, the 955-residue chain is Kinesin-like protein KIN-14L (955 aa).

The Calponin-homology (CH) domain maps to 19-140 (AARRFQAVQW…CILGLKAYHE (122 aa)). A Kinesin motor domain is found at 363–685 (NIRVYCRVRP…LKFAQRVSTV (323 aa)). 445-452 (GQTGSGKT) provides a ligand contact to ATP. A coiled-coil region spans residues 692–719 (AHKETREVMHLKEQIENLKRALGTEEWN). Residues 878-942 (RKENIPADPR…GKPIENGKKD (65 aa)) form a disordered region. The segment covering 894-916 (NNFSHIKSPDTSNAKTMRRQSLT) has biased composition (polar residues).

It belongs to the TRAFAC class myosin-kinesin ATPase superfamily. Kinesin family. KIN-14 subfamily.

The polypeptide is Kinesin-like protein KIN-14L (Arabidopsis thaliana (Mouse-ear cress)).